Here is a 96-residue protein sequence, read N- to C-terminus: ESAT-6-like protein EsxH (96 aa).

Zn(2+)-binding residues include histidine 14, histidine 70, histidine 76, and glutamate 77.

The protein belongs to the WXG100 family. ESAT-6 subfamily. In terms of assembly, forms a tight 1:1 complex with EsxG. When it is complexed to EsxG, interacts directly with host HGS/HRS.

It localises to the secreted. Functionally, esxH, in complex with EsxG, disrupts ESCRT function and impairs host phagosome maturation, thereby promoting intracellular bacterial growth. The complex acts by interacting, via EsxH, with the host hepatocyte growth factor-regulated tyrosine kinase substrate (HGS/HRS), a component of the ESCRT machinery. The sequence is that of ESAT-6-like protein EsxH from Mycobacterium tuberculosis (strain ATCC 25618 / H37Rv).